A 235-amino-acid chain; its full sequence is Ribonuclease 3 (235 aa).

The RNase III domain occupies 6 to 135; it reads LISLEKILGF…VIGAVYFDCG (130 aa). E48 contacts Mg(2+). Residue D52 is part of the active site. Mg(2+) is bound by residues N121 and E124. Residue E124 is part of the active site. The region spanning 162 to 231 is the DRBM domain; that stretch reads DEKTTLQELL…AKKALELLKN (70 aa).

This sequence belongs to the ribonuclease III family. As to quaternary structure, homodimer. Mg(2+) serves as cofactor.

The protein localises to the cytoplasm. It carries out the reaction Endonucleolytic cleavage to 5'-phosphomonoester.. Its function is as follows. Digests double-stranded RNA. Involved in the processing of primary rRNA transcript to yield the immediate precursors to the large and small rRNAs (23S and 16S). Processes some mRNAs, and tRNAs when they are encoded in the rRNA operon. Processes pre-crRNA and tracrRNA of type II CRISPR loci if present in the organism. In Carboxydothermus hydrogenoformans (strain ATCC BAA-161 / DSM 6008 / Z-2901), this protein is Ribonuclease 3.